The primary structure comprises 143 residues: Small ribosomal subunit protein uS9 (143 aa).

Residues R123–R143 are disordered. Over residues A134 to R143 the composition is skewed to basic residues.

The protein belongs to the universal ribosomal protein uS9 family.

This Kluyveromyces lactis (strain ATCC 8585 / CBS 2359 / DSM 70799 / NBRC 1267 / NRRL Y-1140 / WM37) (Yeast) protein is Small ribosomal subunit protein uS9 (RPS16).